A 225-amino-acid polypeptide reads, in one-letter code: Imidazole glycerol phosphate synthase subunit HisH (225 aa).

The Glutamine amidotransferase type-1 domain occupies 5–220 (KNVIVDTGCA…LELDSTELNQ (216 aa)). Residue Cys-80 is the Nucleophile of the active site. Residues His-195 and Glu-197 contribute to the active site.

In terms of assembly, heterodimer of HisH and HisF.

It is found in the cytoplasm. The catalysed reaction is 5-[(5-phospho-1-deoxy-D-ribulos-1-ylimino)methylamino]-1-(5-phospho-beta-D-ribosyl)imidazole-4-carboxamide + L-glutamine = D-erythro-1-(imidazol-4-yl)glycerol 3-phosphate + 5-amino-1-(5-phospho-beta-D-ribosyl)imidazole-4-carboxamide + L-glutamate + H(+). The enzyme catalyses L-glutamine + H2O = L-glutamate + NH4(+). It functions in the pathway amino-acid biosynthesis; L-histidine biosynthesis; L-histidine from 5-phospho-alpha-D-ribose 1-diphosphate: step 5/9. Functionally, IGPS catalyzes the conversion of PRFAR and glutamine to IGP, AICAR and glutamate. The HisH subunit catalyzes the hydrolysis of glutamine to glutamate and ammonia as part of the synthesis of IGP and AICAR. The resulting ammonia molecule is channeled to the active site of HisF. The protein is Imidazole glycerol phosphate synthase subunit HisH of Colwellia psychrerythraea (strain 34H / ATCC BAA-681) (Vibrio psychroerythus).